Here is an 800-residue protein sequence, read N- to C-terminus: Phenylalanine--tRNA ligase beta subunit (800 aa).

The region spanning 39–154 is the tRNA-binding domain; it reads TKDIKNLVVG…ESQVPGTDAL (116 aa). The region spanning 408-483 is the B5 domain; that stretch reads AFITPIDITA…RIYGYDDIPS (76 aa). Residues Asp-461, Asp-467, Glu-470, and Glu-471 each coordinate Mg(2+). An FDX-ACB domain is found at 708–800; it reads PRFPGMSRDI…ALIEQGAVIR (93 aa).

Belongs to the phenylalanyl-tRNA synthetase beta subunit family. Type 1 subfamily. Tetramer of two alpha and two beta subunits. It depends on Mg(2+) as a cofactor.

It is found in the cytoplasm. The catalysed reaction is tRNA(Phe) + L-phenylalanine + ATP = L-phenylalanyl-tRNA(Phe) + AMP + diphosphate + H(+). This is Phenylalanine--tRNA ligase beta subunit from Staphylococcus aureus (strain MRSA252).